The following is a 470-amino-acid chain: Small ribosomal subunit protein bS1m (470 aa).

A disordered region spans residues 436-470 (FKKIPMTAARLRGRYENSDSPSSPTMSGSSGYGLR). Over residues 453–464 (SDSPSSPTMSGS) the composition is skewed to low complexity.

It belongs to the bacterial ribosomal protein bS1 family. In terms of assembly, component of the mitochondrial small ribosomal subunit (mt-SSU). Mature N.crassa 74S mitochondrial ribosomes consist of a small (37S) and a large (54S) subunit. The 37S small subunit contains a 16S ribosomal RNA (16S mt-rRNA) and 32 different proteins. The 54S large subunit contains a 23S rRNA (23S mt-rRNA) and 42 different proteins.

Its subcellular location is the mitochondrion. Functionally, component of the mitochondrial ribosome (mitoribosome), a dedicated translation machinery responsible for the synthesis of mitochondrial genome-encoded proteins, including at least some of the essential transmembrane subunits of the mitochondrial respiratory chain. The mitoribosomes are attached to the mitochondrial inner membrane and translation products are cotranslationally integrated into the membrane. The protein is Small ribosomal subunit protein bS1m (mrp51) of Neurospora crassa (strain ATCC 24698 / 74-OR23-1A / CBS 708.71 / DSM 1257 / FGSC 987).